A 601-amino-acid chain; its full sequence is Probable sphingosine-1-phosphate lyase (601 aa).

K360 carries the N6-(pyridoxal phosphate)lysine modification.

The protein belongs to the group II decarboxylase family. Sphingosine-1-phosphate lyase subfamily. Requires pyridoxal 5'-phosphate as cofactor.

It catalyses the reaction sphinganine 1-phosphate = hexadecanal + phosphoethanolamine. Functionally, cleaves phosphorylated sphingoid bases (PSBs), such as sphingosine-1-phosphate, into fatty aldehydes and phosphoethanolamine. Possibly implicated in influencing the macrophage autophagy pathway. The polypeptide is Probable sphingosine-1-phosphate lyase (Legionella pneumophila subsp. pneumophila (strain Philadelphia 1 / ATCC 33152 / DSM 7513)).